A 106-amino-acid polypeptide reads, in one-letter code: Large ribosomal subunit protein bL21 (106 aa).

This sequence belongs to the bacterial ribosomal protein bL21 family. In terms of assembly, part of the 50S ribosomal subunit. Contacts protein L20.

Functionally, this protein binds to 23S rRNA in the presence of protein L20. This Dichelobacter nodosus (strain VCS1703A) protein is Large ribosomal subunit protein bL21.